The sequence spans 462 residues: Argininosuccinate lyase (462 aa).

It belongs to the lyase 1 family. Argininosuccinate lyase subfamily.

The protein localises to the cytoplasm. It catalyses the reaction 2-(N(omega)-L-arginino)succinate = fumarate + L-arginine. It functions in the pathway amino-acid biosynthesis; L-arginine biosynthesis; L-arginine from L-ornithine and carbamoyl phosphate: step 3/3. This chain is Argininosuccinate lyase, found in Bacillus cereus (strain AH820).